The chain runs to 668 residues: Probable serine/threonine-protein kinase abkB (668 aa).

Disordered stretches follow at residues 88–111 (YTNI…KTTA) and 132–162 (EVEE…DDNK). Polar residues predominate over residues 91 to 105 (IGGTSPNRQSVPENS). The stretch at 131-163 (KEVEEEIIDKNERGKEQEQENKQQKEQKDDNKS) forms a coiled coil. Residues 138–162 (IDKNERGKEQEQENKQQKEQKDDNK) are compositionally biased toward basic and acidic residues. A Protein kinase domain is found at 314 to 668 (DFERLPINSA…EIPSTYHHHH (355 aa)). ATP contacts are provided by residues 320–328 (INSASLAQV) and Lys-346. Asp-478 serves as the catalytic Proton acceptor.

This sequence belongs to the protein kinase superfamily. ADCK protein kinase family.

The sequence is that of Probable serine/threonine-protein kinase abkB (abkB) from Dictyostelium discoideum (Social amoeba).